A 239-amino-acid chain; its full sequence is tRNA (guanine-N(1)-)-methyltransferase (239 aa).

S-adenosyl-L-methionine contacts are provided by residues G108 and 127-132 (LGDFVL).

This sequence belongs to the RNA methyltransferase TrmD family. Homodimer.

It is found in the cytoplasm. The enzyme catalyses guanosine(37) in tRNA + S-adenosyl-L-methionine = N(1)-methylguanosine(37) in tRNA + S-adenosyl-L-homocysteine + H(+). Functionally, specifically methylates guanosine-37 in various tRNAs. The polypeptide is tRNA (guanine-N(1)-)-methyltransferase (Streptococcus thermophilus (strain CNRZ 1066)).